The sequence spans 845 residues: Dynein axonemal assembly factor 5 (845 aa).

HEAT repeat units follow at residues 47–84, 138–175, 180–217, 260–297, 332–369, 523–561, 674–715, and 766–803; these read DVFD…SLPP, ECYP…LADT, PFTE…HMDA, SFFE…QYFN, QRSL…HAEA, NFGQ…LDAA, SESV…MSVE, and AIVK…SHPE.

Belongs to the DNAAF5 family. As to expression, expressed in testis.

Its subcellular location is the cytoplasm. The protein localises to the dynein axonemal particle. In terms of biological role, cytoplasmic protein involved in the delivery of the dynein machinery to the motile cilium. It is required for the assembly of the axonemal dynein inner and outer arms, two structures attached to the peripheral outer doublet A microtubule of the axoneme, that play a crucial role in cilium motility. This chain is Dynein axonemal assembly factor 5, found in Drosophila melanogaster (Fruit fly).